The following is a 362-amino-acid chain: tRNA-specific 2-thiouridylase MnmA (362 aa).

ATP is bound by residues 13-20 (GLSGGVDS) and M39. Residues 99-101 (NPD) form an interaction with target base in tRNA region. C104 functions as the Nucleophile in the catalytic mechanism. Cysteines 104 and 200 form a disulfide. G128 is an ATP binding site. The tract at residues 150–152 (KDQ) is interaction with tRNA. C200 functions as the Cysteine persulfide intermediate in the catalytic mechanism.

Belongs to the MnmA/TRMU family.

The protein resides in the cytoplasm. The enzyme catalyses S-sulfanyl-L-cysteinyl-[protein] + uridine(34) in tRNA + AH2 + ATP = 2-thiouridine(34) in tRNA + L-cysteinyl-[protein] + A + AMP + diphosphate + H(+). Catalyzes the 2-thiolation of uridine at the wobble position (U34) of tRNA, leading to the formation of s(2)U34. In Coxiella burnetii (strain RSA 493 / Nine Mile phase I), this protein is tRNA-specific 2-thiouridylase MnmA.